The chain runs to 307 residues: tRNA dimethylallyltransferase 1 (307 aa).

11–18 (GPTASGKT) is a binding site for ATP. 13–18 (TASGKT) provides a ligand contact to substrate. Interaction with substrate tRNA stretches follow at residues 36-39 (DSRQ) and 159-163 (QRAIR).

This sequence belongs to the IPP transferase family. Monomer. The cofactor is Mg(2+).

The enzyme catalyses adenosine(37) in tRNA + dimethylallyl diphosphate = N(6)-dimethylallyladenosine(37) in tRNA + diphosphate. Functionally, catalyzes the transfer of a dimethylallyl group onto the adenine at position 37 in tRNAs that read codons beginning with uridine, leading to the formation of N6-(dimethylallyl)adenosine (i(6)A). The sequence is that of tRNA dimethylallyltransferase 1 from Parabacteroides distasonis (strain ATCC 8503 / DSM 20701 / CIP 104284 / JCM 5825 / NCTC 11152).